The following is a 157-amino-acid chain: MLLEGSCHCGAVRFRVVSPHPYPFNRCYCSICRKTAGGGGYAINLSGDADTLVVHGAEHTSIYQAEIDGLTSPGERHFCSRCASALWVFDPRWPELVHPFASAIDSDLPRPPERVHLMLENKPDWVEIESREQDRCFAGYPDESIAEWHARLGLEEG.

The region spanning 3–134 (LEGSCHCGAV…WVEIESREQD (132 aa)) is the CENP-V/GFA domain. 7 residues coordinate Zn(2+): C7, C9, C27, C29, C32, C79, and C82.

Belongs to the Gfa family. It depends on Zn(2+) as a cofactor.

The enzyme catalyses S-(hydroxymethyl)glutathione = glutathione + formaldehyde. Its pathway is one-carbon metabolism; formaldehyde degradation; formate from formaldehyde (glutathione route): step 1/3. In terms of biological role, catalyzes the condensation of formaldehyde and glutathione to S-hydroxymethylglutathione. The polypeptide is Putative glutathione-dependent formaldehyde-activating enzyme (Halomonas elongata (strain ATCC 33173 / DSM 2581 / NBRC 15536 / NCIMB 2198 / 1H9)).